A 78-amino-acid chain; its full sequence is MCNIVVFLLTLTLFLFSGLSNTAFARVQYEPLKPKFGARVWDQKMIKNIKIEVDGSCSRRAPGRRRPPNRPPKPCTKP.

An N-terminal signal peptide occupies residues 1–25 (MCNIVVFLLTLTLFLFSGLSNTAFA). Residues 50–64 (KIEVDGSCSRRAPGR) carry the SCOOP motif motif. Positions 56–58 (SCS) match the SxS motif essential for MIK2 binding motif. A disordered region spans residues 57 to 78 (CSRRAPGRRRPPNRPPKPCTKP). Over residues 69 to 78 (NRPPKPCTKP) the composition is skewed to pro residues.

The protein belongs to the serine rich endogenous peptide (SCOOP) phytocytokine family. As to quaternary structure, interacts with MIK2 (via extracellular leucine-rich repeat domain); this interaction triggers the formation of complex between MIK2 and the BAK1/SERK3 and SERK4 coreceptors, and subsequent BAK1 activation by phosphorylation.

The protein resides in the cell membrane. It localises to the secreted. It is found in the extracellular space. Its subcellular location is the apoplast. Functionally, brassicaceae-specific phytocytokine (plant endogenous peptide released into the apoplast) perceived by MIK2 in a BAK1/SERK3 and SERK4 coreceptors-dependent manner, that modulates various physiological and antimicrobial processes including growth prevention and reactive oxygen species (ROS) response regulation. The protein is Serine rich endogenous peptide 19 of Arabidopsis thaliana (Mouse-ear cress).